The following is a 657-amino-acid chain: Histidine ammonia-lyase (657 aa).

Positions 253-255 (ASG) form a cross-link, 5-imidazolinone (Ala-Gly). Ser-254 is modified (2,3-didehydroalanine (Ser)). Thr-396 carries the post-translational modification Phosphothreonine. Position 635 is a phosphoserine (Ser-635). Position 637 is a phosphothreonine (Thr-637). The residue at position 648 (Ser-648) is a Phosphoserine.

Belongs to the PAL/histidase family. In terms of processing, contains an active site 4-methylidene-imidazol-5-one (MIO), which is formed autocatalytically by cyclization and dehydration of residues Ala-Ser-Gly.

The catalysed reaction is L-histidine = trans-urocanate + NH4(+). It functions in the pathway amino-acid degradation; L-histidine degradation into L-glutamate; N-formimidoyl-L-glutamate from L-histidine: step 1/3. In Bos taurus (Bovine), this protein is Histidine ammonia-lyase (HAL).